The following is a 353-amino-acid chain: 3-dehydroquinate synthase (353 aa).

NAD(+) contacts are provided by residues 62–67, 96–100, 120–121, lysine 133, and lysine 142; these read DGEQYK, GVIGD, and TT. Zn(2+) is bound by residues glutamate 175, histidine 236, and histidine 253.

The protein belongs to the sugar phosphate cyclases superfamily. Dehydroquinate synthase family. The cofactor is NAD(+). Co(2+) is required as a cofactor. Requires Zn(2+) as cofactor.

It localises to the cytoplasm. It catalyses the reaction 7-phospho-2-dehydro-3-deoxy-D-arabino-heptonate = 3-dehydroquinate + phosphate. It functions in the pathway metabolic intermediate biosynthesis; chorismate biosynthesis; chorismate from D-erythrose 4-phosphate and phosphoenolpyruvate: step 2/7. Catalyzes the conversion of 3-deoxy-D-arabino-heptulosonate 7-phosphate (DAHP) to dehydroquinate (DHQ). The protein is 3-dehydroquinate synthase of Helicobacter hepaticus (strain ATCC 51449 / 3B1).